The primary structure comprises 62 residues: Photosystem II reaction center protein Z (62 aa).

The next 2 membrane-spanning stretches (helical) occupy residues Ala8–Ala28 and Phe41–Ile61.

It belongs to the PsbZ family. PSII is composed of 1 copy each of membrane proteins PsbA, PsbB, PsbC, PsbD, PsbE, PsbF, PsbH, PsbI, PsbJ, PsbK, PsbL, PsbM, PsbT, PsbY, PsbZ, Psb30/Ycf12, at least 3 peripheral proteins of the oxygen-evolving complex and a large number of cofactors. It forms dimeric complexes.

It localises to the plastid. It is found in the chloroplast thylakoid membrane. In terms of biological role, may control the interaction of photosystem II (PSII) cores with the light-harvesting antenna, regulates electron flow through the 2 photosystem reaction centers. PSII is a light-driven water plastoquinone oxidoreductase, using light energy to abstract electrons from H(2)O, generating a proton gradient subsequently used for ATP formation. The polypeptide is Photosystem II reaction center protein Z (Spinacia oleracea (Spinach)).